Here is a 447-residue protein sequence, read N- to C-terminus: Phosphoglucosamine mutase (447 aa).

Serine 106 serves as the catalytic Phosphoserine intermediate. 4 residues coordinate Mg(2+): serine 106, aspartate 245, aspartate 247, and aspartate 249. The residue at position 106 (serine 106) is a Phosphoserine.

It belongs to the phosphohexose mutase family. It depends on Mg(2+) as a cofactor. Post-translationally, activated by phosphorylation.

It catalyses the reaction alpha-D-glucosamine 1-phosphate = D-glucosamine 6-phosphate. In terms of biological role, catalyzes the conversion of glucosamine-6-phosphate to glucosamine-1-phosphate. This is Phosphoglucosamine mutase from Cupriavidus pinatubonensis (strain JMP 134 / LMG 1197) (Cupriavidus necator (strain JMP 134)).